Reading from the N-terminus, the 122-residue chain is Small ribosomal subunit protein uS13 (122 aa).

The tract at residues 95–122 (GLPVRGQRTHTNARTRKGPAKPIAGKKK) is disordered.

The protein belongs to the universal ribosomal protein uS13 family. As to quaternary structure, part of the 30S ribosomal subunit. Forms a loose heterodimer with protein S19. Forms two bridges to the 50S subunit in the 70S ribosome.

Its function is as follows. Located at the top of the head of the 30S subunit, it contacts several helices of the 16S rRNA. In the 70S ribosome it contacts the 23S rRNA (bridge B1a) and protein L5 of the 50S subunit (bridge B1b), connecting the 2 subunits; these bridges are implicated in subunit movement. Contacts the tRNAs in the A and P-sites. In Caulobacter sp. (strain K31), this protein is Small ribosomal subunit protein uS13.